A 129-amino-acid polypeptide reads, in one-letter code: MLHLHILSWVLAIILFIATYLNISKNQGRSPFFKPLHMILRLFMLLTLISGFWILIQSFMNGGANHMLLTLKMLCGVAVVGLMEVSIAKRKRHEQSHTMFWITIALIIITMVLGVILPLGPISKLFGIG.

The next 4 helical transmembrane spans lie at 1–21, 36–56, 67–87, and 99–119; these read MLHL…ATYL, LHMI…WILI, MLLT…EVSI, and MFWI…ILPL.

It belongs to the UPF0344 family.

The protein resides in the cell membrane. This chain is UPF0344 protein USA300HOU_0928, found in Staphylococcus aureus (strain USA300 / TCH1516).